We begin with the raw amino-acid sequence, 126 residues long: Glycine cleavage system H protein (126 aa).

Residues 24–105 enclose the Lipoyl-binding domain; it reads TLTVGITDHA…AYGVWLFKIK (82 aa). Lys65 is subject to N6-lipoyllysine.

Belongs to the GcvH family. In terms of assembly, the glycine cleavage system is composed of four proteins: P, T, L and H. (R)-lipoate is required as a cofactor.

In terms of biological role, the glycine cleavage system catalyzes the degradation of glycine. The H protein shuttles the methylamine group of glycine from the P protein to the T protein. The polypeptide is Glycine cleavage system H protein (Burkholderia cenocepacia (strain ATCC BAA-245 / DSM 16553 / LMG 16656 / NCTC 13227 / J2315 / CF5610) (Burkholderia cepacia (strain J2315))).